We begin with the raw amino-acid sequence, 97 residues long: UPF0235 protein LHK_03181 (97 aa).

It belongs to the UPF0235 family.

This chain is UPF0235 protein LHK_03181, found in Laribacter hongkongensis (strain HLHK9).